A 564-amino-acid chain; its full sequence is Forkhead transcription factor HCM1 (564 aa).

Positions 33–80 are disordered; it reads DEKEMITPPSSTVRKTMKEVNKRPSHPLSPDHSSPIAPSKAKRQRSDT. The span at 58–67 shows a compositional bias: low complexity; that stretch reads HPLSPDHSSP. Residues 108–199 constitute a DNA-binding region (fork-head); that stretch reads KKPPYSYATL…KFFKGENRGY (92 aa). Over residues 224–241 the composition is skewed to acidic residues; the sequence is QVESGEGNDDLPDEEERE. Positions 224-246 are disordered; the sequence is QVESGEGNDDLPDEEEREEAGKF. Residue T342 is modified to Phosphothreonine. The segment at 401 to 448 is disordered; it reads SKPQSQQSYSNSQLPPPPSSHGSDLLKTPKMRHSDGLEKTPSRLISTP. A compositionally biased stretch (polar residues) spans 402 to 413; it reads KPQSQQSYSNSQ. The span at 432 to 441 shows a compositional bias: basic and acidic residues; sequence RHSDGLEKTP. S496 is subject to Phosphoserine. Residues 536-564 form a disordered region; that stretch reads SDGNNTTDSNQKHHPYHNHPSNDSGNEKN. Over residues 554-564 the composition is skewed to polar residues; the sequence is HPSNDSGNEKN.

Post-translationally, phosphorylated by CDK1.

The protein localises to the cytoplasm. It localises to the nucleus. Transcription factor regulating the cell cycle specific transcription of a spindle pole body (SPB) calmodulin binding protein SPC110. Required for full induction of SPC110 transcription in late G1. Binds to DNA consensus sequence 5'-[AT]AA[TC]AAACAA[AT]-3'. Dosage dependent suppressor of calmodulin mutants which have specific defects in SPB assembly. This chain is Forkhead transcription factor HCM1 (HCM1), found in Saccharomyces cerevisiae (strain ATCC 204508 / S288c) (Baker's yeast).